Consider the following 251-residue polypeptide: MEVAFDIRNFSVYYGNKVGIRNVNLEIYRNKVTAIIGPSGCGKSTLLRSLNRLIELVDGVRIEGEVIFDGKNIYDDGVDAVELRRRIGMVFQHPNPFPKSIFDNVAYGPRVHGIKDKERLKEIVEESLKKAALWDEVKDRLSDSALGLSGGQQQRLCIARAIATNPEVILFDEPTSALDPIAAAKIEELMVELKKNYTVVVVTHNIQQAARISDYVAFFWMGELVEYGKTAKVFEKPEKELTEKYLTGRVG.

The ABC transporter domain occupies 5–246 (FDIRNFSVYY…PEKELTEKYL (242 aa)). 37–44 (GPSGCGKS) provides a ligand contact to ATP.

The protein belongs to the ABC transporter superfamily. Phosphate importer (TC 3.A.1.7) family. In terms of assembly, the complex is composed of two ATP-binding proteins (PstB), two transmembrane proteins (PstC and PstA) and a solute-binding protein (PstS).

It localises to the cell membrane. It carries out the reaction phosphate(out) + ATP + H2O = ADP + 2 phosphate(in) + H(+). Part of the ABC transporter complex PstSACB involved in phosphate import. Responsible for energy coupling to the transport system. The protein is Phosphate import ATP-binding protein PstB of Archaeoglobus fulgidus (strain ATCC 49558 / DSM 4304 / JCM 9628 / NBRC 100126 / VC-16).